The primary structure comprises 201 residues: Holliday junction branch migration complex subunit RuvA (201 aa).

Positions 1-64 (MIGRLRGELV…EDAHVLYGFA (64 aa)) are domain I. Positions 65–143 (SESERALFRS…SLPAAVTLTG (79 aa)) are domain II. The interval 144–153 (GKPAAAAARA) is flexible linker. The tract at residues 153–201 (APDPVSDAVSALVSLGYKPQEASRLISAVEGEAERSEDLIRLALKATLK) is domain III.

The protein belongs to the RuvA family. As to quaternary structure, homotetramer. Forms an RuvA(8)-RuvB(12)-Holliday junction (HJ) complex. HJ DNA is sandwiched between 2 RuvA tetramers; dsDNA enters through RuvA and exits via RuvB. An RuvB hexamer assembles on each DNA strand where it exits the tetramer. Each RuvB hexamer is contacted by two RuvA subunits (via domain III) on 2 adjacent RuvB subunits; this complex drives branch migration. In the full resolvosome a probable DNA-RuvA(4)-RuvB(12)-RuvC(2) complex forms which resolves the HJ.

It localises to the cytoplasm. Functionally, the RuvA-RuvB-RuvC complex processes Holliday junction (HJ) DNA during genetic recombination and DNA repair, while the RuvA-RuvB complex plays an important role in the rescue of blocked DNA replication forks via replication fork reversal (RFR). RuvA specifically binds to HJ cruciform DNA, conferring on it an open structure. The RuvB hexamer acts as an ATP-dependent pump, pulling dsDNA into and through the RuvAB complex. HJ branch migration allows RuvC to scan DNA until it finds its consensus sequence, where it cleaves and resolves the cruciform DNA. The chain is Holliday junction branch migration complex subunit RuvA from Thioalkalivibrio sulfidiphilus (strain HL-EbGR7).